Reading from the N-terminus, the 165-residue chain is Large ribosomal subunit protein uL10 (165 aa).

It belongs to the universal ribosomal protein uL10 family. In terms of assembly, part of the ribosomal stalk of the 50S ribosomal subunit. The N-terminus interacts with L11 and the large rRNA to form the base of the stalk. The C-terminus forms an elongated spine to which L12 dimers bind in a sequential fashion forming a multimeric L10(L12)X complex.

Forms part of the ribosomal stalk, playing a central role in the interaction of the ribosome with GTP-bound translation factors. The polypeptide is Large ribosomal subunit protein uL10 (Pectobacterium atrosepticum (strain SCRI 1043 / ATCC BAA-672) (Erwinia carotovora subsp. atroseptica)).